Consider the following 61-residue polypeptide: GKVWDWIKKTAKDVLNSDVAKQLKNKALNAAKNFVAEKIGATPSEAGQMPFDEFMDILHYY.

The propeptide occupies 45 to 61 (EAGQMPFDEFMDILHYY).

This sequence belongs to the non-disulfide-bridged peptide (NDBP) superfamily. Long chain multifunctional peptide (group 2) family. As to expression, expressed by the venom gland.

Its subcellular location is the secreted. The protein localises to the target cell membrane. At high concentrations, acts as a pore former in cellular membranes and causes the leakage of the cells. At submicromolar concentrations, degranulates granulocytes and has a weak hemolytic activity against human erythrocytes. Also strongly inhibits the production of superoxide anions. Has a strong antibacterial activity against Gram-negative bacteria but is less active against Gram-positive bacteria. Also has antifungal activity. In Opistophthalmus carinatus (African yellow leg scorpion), this protein is Opistoporin-4.